Reading from the N-terminus, the 425-residue chain is Formyl-CoA:oxalate CoA-transferase (425 aa).

CoA is bound by residues 17-18, Arg38, 72-75, 96-98, Arg104, and 136-139; these read QS, LDTK, NFG, and KVYE. Asp168 functions as the Nucleophile in the catalytic mechanism. Substrate is bound at residue 247–249; sequence GGQ.

This sequence belongs to the CoA-transferase III family. Frc subfamily. In terms of assembly, homodimer.

It carries out the reaction formyl-CoA + oxalate = oxalyl-CoA + formate. It participates in metabolic intermediate degradation; oxalate degradation; CO(2) and formate from oxalate: step 1/2. In terms of biological role, involved in the catabolism of oxalate and in the adapatation to low pH via the induction of the oxalate-dependent acid tolerance response (ATR). Catalyzes the transfer of the CoA moiety from formyl-CoA to oxalate. The polypeptide is Formyl-CoA:oxalate CoA-transferase (Rhodopseudomonas palustris (strain HaA2)).